A 1186-amino-acid chain; its full sequence is Chromosome partition protein Smc (1186 aa).

32–39 contributes to the ATP binding site; it reads PNGSGKSN. 2 coiled-coil regions span residues 167–206 and 259–481; these read VLKYKTRKKKAENKLFETQDNLNRVEDILHELEGQVEPLK and SSAI…QAYQ. Residues 519–637 form the SMC hinge domain; it reads GIRGAVLELI…EDLKGANELA (119 aa). Coiled-coil stretches lie at residues 672–864, 893–943, and 990–1029; these read LLGR…MSSS, RDQR…NLLQ, and SIDEFERVNERYKFLSEQKEDLTEAKNTLFQVIEEMDEEM.

The protein belongs to the SMC family. Homodimer.

It localises to the cytoplasm. In terms of biological role, required for chromosome condensation and partitioning. The polypeptide is Chromosome partition protein Smc (Bacillus subtilis (strain 168)).